Here is a 451-residue protein sequence, read N- to C-terminus: Ribosomal protein uS12 methylthiotransferase RimO (451 aa).

One can recognise an MTTase N-terminal domain in the interval 17 to 127 (PTIGFVSLGC…VLAQVHEHLP (111 aa)). Residues C26, C62, C91, C160, C164, and C167 each coordinate [4Fe-4S] cluster. Residues 146-383 (LTPRHYAYLK…MQLQQRISTE (238 aa)) form the Radical SAM core domain. The 66-residue stretch at 386–451 (KQKVGQTLPV…DEYDLWGTRV (66 aa)) folds into the TRAM domain.

The protein belongs to the methylthiotransferase family. RimO subfamily. The cofactor is [4Fe-4S] cluster.

The protein resides in the cytoplasm. The catalysed reaction is L-aspartate(89)-[ribosomal protein uS12]-hydrogen + (sulfur carrier)-SH + AH2 + 2 S-adenosyl-L-methionine = 3-methylsulfanyl-L-aspartate(89)-[ribosomal protein uS12]-hydrogen + (sulfur carrier)-H + 5'-deoxyadenosine + L-methionine + A + S-adenosyl-L-homocysteine + 2 H(+). Its function is as follows. Catalyzes the methylthiolation of an aspartic acid residue of ribosomal protein uS12. This is Ribosomal protein uS12 methylthiotransferase RimO from Cellvibrio japonicus (strain Ueda107) (Pseudomonas fluorescens subsp. cellulosa).